The following is a 356-amino-acid chain: Tyrosine recombinase XerS (356 aa).

The Core-binding (CB) domain occupies 16 to 121 (TMPWYILEYY…ALSSLYKYLT (106 aa)). The Tyr recombinase domain occupies 169–354 (EFLQYIDTEY…VNDEQKNALD (186 aa)). Catalysis depends on residues Arg-210, Lys-234, His-306, Arg-309, and His-332. Tyr-341 (O-(3'-phospho-DNA)-tyrosine intermediate) is an active-site residue.

It belongs to the 'phage' integrase family. XerS subfamily.

It localises to the cytoplasm. FtsK is required for recombination. Site-specific tyrosine recombinase, which acts by catalyzing the cutting and rejoining of the recombining DNA molecules. Essential to convert dimers of the bacterial chromosome into monomers to permit their segregation at cell division. This is Tyrosine recombinase XerS from Streptococcus sanguinis (strain SK36).